A 233-amino-acid chain; its full sequence is Ion-translocating oxidoreductase complex subunit E (233 aa).

Helical transmembrane passes span 18–38 (ALVQ…ATNA), 39–59 (LGLG…VSAL), 69–89 (IPIY…LINA), 92–112 (FGLY…CIVI), 128–148 (ALDG…LGAL), and 182–202 (PFLL…LLAG).

It belongs to the NqrDE/RnfAE family. In terms of assembly, the complex is composed of six subunits: RnfA, RnfB, RnfC, RnfD, RnfE and RnfG.

It localises to the cell inner membrane. Part of a membrane-bound complex that couples electron transfer with translocation of ions across the membrane. The protein is Ion-translocating oxidoreductase complex subunit E of Yersinia pestis bv. Antiqua (strain Angola).